A 509-amino-acid chain; its full sequence is Steroid 17-alpha-hydroxylase/17,20 lyase (509 aa).

Residue Cys-440 participates in heme binding.

Belongs to the cytochrome P450 family. Requires heme as cofactor.

It is found in the endoplasmic reticulum membrane. The protein resides in the microsome membrane. It carries out the reaction a C21-steroid + reduced [NADPH--hemoprotein reductase] + O2 = a 17alpha-hydroxy-C21-steroid + oxidized [NADPH--hemoprotein reductase] + H2O + H(+). The enzyme catalyses progesterone + reduced [NADPH--hemoprotein reductase] + O2 = 17alpha-hydroxyprogesterone + oxidized [NADPH--hemoprotein reductase] + H2O + H(+). The catalysed reaction is pregnenolone + reduced [NADPH--hemoprotein reductase] + O2 = 17alpha-hydroxypregnenolone + oxidized [NADPH--hemoprotein reductase] + H2O + H(+). It catalyses the reaction 17alpha-hydroxyprogesterone + reduced [NADPH--hemoprotein reductase] + O2 = androst-4-ene-3,17-dione + acetate + oxidized [NADPH--hemoprotein reductase] + H2O + 2 H(+). It carries out the reaction 17alpha-hydroxyprogesterone + reduced [NADPH--hemoprotein reductase] + O2 = 16alpha,17alpha-dihydroxyprogesterone + oxidized [NADPH--hemoprotein reductase] + H2O + H(+). The enzyme catalyses 16alpha,17alpha-dihydroxyprogesterone + reduced [NADPH--hemoprotein reductase] + O2 = 6beta,16alpha,17alpha-trihydroxyprogesterone + oxidized [NADPH--hemoprotein reductase] + H2O + H(+). The catalysed reaction is 17alpha-hydroxypregnenolone + reduced [NADPH--hemoprotein reductase] + O2 = 3beta-hydroxyandrost-5-en-17-one + acetate + oxidized [NADPH--hemoprotein reductase] + H2O + 2 H(+). It catalyses the reaction 16alpha,17alpha-dihydroxypregnenolone + reduced [NADPH--hemoprotein reductase] + O2 = 3beta,16alpha-dihydroxy-androst-5-en-17-one + acetate + oxidized [NADPH--hemoprotein reductase] + H2O + 2 H(+). It carries out the reaction 3beta-hydroxyandrost-5-en-17-one + reduced [NADPH--hemoprotein reductase] + O2 = 3beta,16alpha-dihydroxy-androst-5-en-17-one + oxidized [NADPH--hemoprotein reductase] + H2O + H(+). The enzyme catalyses androst-4-ene-3,17-dione + reduced [NADPH--hemoprotein reductase] + O2 = 16alpha-hydroxyandrost-4-ene-3,17-dione + oxidized [NADPH--hemoprotein reductase] + H2O + H(+). It participates in steroid hormone biosynthesis. The protein operates within steroid biosynthesis; glucocorticoid biosynthesis. Its activity is regulated as follows. Regulated predominantly by intracellular cAMP levels. The 17,20-lyase activity is stimulated by cytochrome b5, which acts as an allosteric effector increasing the Vmax of the lyase activity. A cytochrome P450 monooxygenase involved in corticoid and androgen biosynthesis. Catalyzes 17-alpha hydroxylation of C21 steroids, which is common for both pathways. A second oxidative step, required only for androgen synthesis, involves an acyl-carbon cleavage. The 17-alpha hydroxy intermediates, as part of adrenal glucocorticoids biosynthesis pathway, are precursors of cortisol. Hydroxylates steroid hormones, pregnenolone and progesterone to form 17-alpha hydroxy metabolites, followed by the cleavage of the C17-C20 bond to form C19 steroids, dehydroepiandrosterone (DHEA) and androstenedione. Has 16-alpha hydroxylase activity. Catalyzes 16-alpha hydroxylation of 17-alpha hydroxy pregnenolone, followed by the cleavage of the C17-C20 bond to form 16-alpha-hydroxy DHEA. Also 16-alpha hydroxylates androgens, relevant for estriol synthesis. Mechanistically, uses molecular oxygen inserting one oxygen atom into a substrate, and reducing the second into a water molecule, with two electrons provided by NADPH via cytochrome P450 reductase (CPR; NADPH-ferrihemoprotein reductase). The protein is Steroid 17-alpha-hydroxylase/17,20 lyase (Cyp17a1) of Peromyscus leucopus (White-footed mouse).